The chain runs to 181 residues: Adenylate kinase (181 aa).

10–15 (GAGKGT) provides a ligand contact to ATP. The NMP stretch occupies residues 30-59 (STGDLFRANIGQATALGVEAKKYIDAGELV). Residues Thr31, Arg36, 57 to 59 (ELV), 85 to 88 (GFPR), and Gln92 contribute to the AMP site. Residues 126 to 132 (ARGRADD) form an LID region. Arg127 is an ATP binding site. AMP contacts are provided by Arg129 and Arg140. Gly166 serves as a coordination point for ATP.

It belongs to the adenylate kinase family. In terms of assembly, monomer.

The protein resides in the cytoplasm. The enzyme catalyses AMP + ATP = 2 ADP. It participates in purine metabolism; AMP biosynthesis via salvage pathway; AMP from ADP: step 1/1. In terms of biological role, catalyzes the reversible transfer of the terminal phosphate group between ATP and AMP. Plays an important role in cellular energy homeostasis and in adenine nucleotide metabolism. This Rhodococcus erythropolis (strain PR4 / NBRC 100887) protein is Adenylate kinase.